Reading from the N-terminus, the 323-residue chain is Aldo-keto reductase family 1 member C1 (323 aa).

NADP(+) contacts are provided by residues 20 to 24 (GFGTY) and aspartate 50. Residue tyrosine 24 coordinates substrate. The active-site Proton donor is the tyrosine 55. Substrate is bound at residue histidine 117. NADP(+)-binding positions include 166–167 (SN), glutamine 190, and 216–222 (YSALGSH). Residues histidine 222 and tryptophan 227 each coordinate substrate. NADP(+) is bound at residue 270–280 (KSYNEQRIREN).

Belongs to the aldo/keto reductase family. As to quaternary structure, monomer. Expressed in liver, adrenal gland, intestine and kidney.

The protein resides in the cytoplasm. It localises to the cytosol. The enzyme catalyses a 3alpha-hydroxysteroid + NADP(+) = a 3-oxosteroid + NADPH + H(+). It carries out the reaction a 3alpha-hydroxysteroid + NAD(+) = a 3-oxosteroid + NADH + H(+). It catalyses the reaction (17R,20S)-17,20-dihydroxypregn-4-en-3-one + NADP(+) = 17alpha-hydroxyprogesterone + NADPH + H(+). The catalysed reaction is (17R,20S)-17,20-dihydroxypregn-4-en-3-one + NAD(+) = 17alpha-hydroxyprogesterone + NADH + H(+). The enzyme catalyses (20S)-hydroxypregn-4-en-3-one + NADP(+) = progesterone + NADPH + H(+). It carries out the reaction (20S)-hydroxypregn-4-en-3-one + NAD(+) = progesterone + NADH + H(+). It catalyses the reaction (1R,2R)-1,2-dihydrobenzene-1,2-diol + NADP(+) = catechol + NADPH + H(+). The catalysed reaction is (S)-indan-1-ol + NAD(+) = indan-1-one + NADH + H(+). The enzyme catalyses (S)-indan-1-ol + NADP(+) = indan-1-one + NADPH + H(+). It carries out the reaction 5alpha-androstane-3alpha,17beta-diol + NADP(+) = 17beta-hydroxy-5alpha-androstan-3-one + NADPH + H(+). It catalyses the reaction 5alpha-androstane-3beta,17beta-diol + NADP(+) = 17beta-hydroxy-5alpha-androstan-3-one + NADPH + H(+). The catalysed reaction is 5alpha-androstane-3alpha,17beta-diol + NAD(+) = 17beta-hydroxy-5alpha-androstan-3-one + NADH + H(+). The enzyme catalyses 17beta-hydroxy-5alpha-androstan-3-one + NADP(+) = 5alpha-androstan-3,17-dione + NADPH + H(+). It carries out the reaction androsterone + NADP(+) = 5alpha-androstan-3,17-dione + NADPH + H(+). It catalyses the reaction androsterone + NADPH + H(+) = 5alpha-androstane-3alpha,17beta-diol + NADP(+). The catalysed reaction is 5alpha-androstane-3alpha,17beta-diol + NAD(+) = androsterone + NADH + H(+). The enzyme catalyses 17beta-estradiol + NADP(+) = estrone + NADPH + H(+). It carries out the reaction 17beta-estradiol + NAD(+) = estrone + NADH + H(+). It catalyses the reaction testosterone + NADP(+) = androst-4-ene-3,17-dione + NADPH + H(+). The catalysed reaction is 20alpha-hydroxy-5beta-pregnan-3-one + NADP(+) = 5beta-pregnan-3,20-dione + NADPH + H(+). The enzyme catalyses 3beta-hydroxy-5beta-pregnane-20-one + NADP(+) = 5beta-pregnan-3,20-dione + NADPH + H(+). It carries out the reaction 3beta-hydroxy-5beta-pregnane-20-one + NADPH + H(+) = 3beta,20alpha-dihydroxy-5beta-pregnane + NADP(+). It catalyses the reaction (3beta,5alpha,17beta)-3-hydroxyandrostan-17-yl sulfate + NADP(+) = 5alpha-dihydrotestosterone sulfate + NADPH + H(+). The protein operates within steroid metabolism. Cytosolic aldo-keto reductase that catalyzes the NADH and NADPH-dependent reduction of ketosteroids to hydroxysteroids. Most probably acts as a reductase in vivo since the oxidase activity measured in vitro is inhibited by physiological concentrations of NADPH. Displays a broad positional specificity acting on positions 3, 17 and 20 of steroids and regulates the metabolism of hormones like estrogens and androgens. May also reduce conjugated steroids such as 5alpha-dihydrotestosterone sulfate. Displays affinity for bile acids. This Macaca fuscata fuscata (Japanese macaque) protein is Aldo-keto reductase family 1 member C1 (AKR1C1).